A 180-amino-acid chain; its full sequence is Prorelaxin (180 aa).

The N-terminal stretch at 1-25 is a signal peptide; it reads MLRLFLSHLLGVWLLLSLRARKIPA. Intrachain disulfides connect Cys-33-Cys-167, Cys-45-Cys-180, and Cys-166-Cys-171. Residues 53-154 constitute a propeptide, connecting peptide; it reads SSQQHREPRQ…RSRLDAHSRI (102 aa).

This sequence belongs to the insulin family. Heterodimer of a B chain and an A chain linked by two disulfide bonds. Expressed by the placenta. Exclusively detected in cells located in the lamellar placental labyrinth and absent from other placental and non-placental uterine parts.

It localises to the secreted. In terms of biological role, relaxin is an ovarian hormone that acts with estrogen to produce dilatation of the birth canal in many mammals. In Felis catus (Cat), this protein is Prorelaxin (RLN).